A 334-amino-acid polypeptide reads, in one-letter code: MSEPIRVLVTGAAGQIAYSLLYSIGNGSVFGKDQPIILVLLDITPMMGVLDGVLMELQDCALPLLQDVIATDKEEVAFKDLDVAVLVGSMPRREGMERKDLLKANVKIFKSQGAALEKYAKKSVKVIVVGNPANTNCLTASKSAPSIPKENFSCLTRLDHNRAKSQIALKLGVTADDVKNVIIWGNHSSTQYPDVNHAKVKLQGKEVGVYEALKDDSWLKGEFITTVQQRGAAVIKARKLSSAMSAAKAISDHIRDIWFGTPEGEFVSMGVISDGNSYGVPDDLLYSFPVVIKNKTWKFVEGLPINDFSREKMDLTAKELTEEKETAFEFLSSA.

Ser2 is subject to N-acetylserine. NAD(+) contacts are provided by residues Gly11–Ala17 and Asp42. Residues Arg92 and Arg98 each contribute to the substrate site. Asn105 provides a ligand contact to NAD(+). At Lys110 the chain carries N6-succinyllysine. Position 112 (Gln112) interacts with NAD(+). 2 positions are modified to N6-acetyllysine: Lys118 and Lys121. Val129–Asn131 is an NAD(+) binding site. Asn131 and Arg162 together coordinate substrate. Catalysis depends on His187, which acts as the Proton acceptor. Lys214 carries the N6-succinyllysine modification. Residue Ser217 is modified to Phosphoserine. An Omega-N-methylarginine modification is found at Arg230. Position 241 is a phosphoserine (Ser241). Lys298 bears the N6-acetyllysine; alternate mark. Position 298 is an N6-succinyllysine; alternate (Lys298). Ser309 is modified (phosphoserine). An N6-succinyllysine modification is found at Lys318. Phosphoserine occurs at positions 332 and 333.

It belongs to the LDH/MDH superfamily. MDH type 2 family. As to quaternary structure, homodimer. In terms of processing, ISGylated. Acetylation at Lys-118 dramatically enhances enzymatic activity and promotes adipogenic differentiation.

It is found in the cytoplasm. Its subcellular location is the cytosol. It carries out the reaction (S)-malate + NAD(+) = oxaloacetate + NADH + H(+). The enzyme catalyses (2R)-2-hydroxy-3-(4-hydroxyphenyl)propanoate + NAD(+) = 3-(4-hydroxyphenyl)pyruvate + NADH + H(+). The catalysed reaction is (S)-2-hydroxyglutarate + NAD(+) = 2-oxoglutarate + NADH + H(+). Catalyzes the reduction of aromatic alpha-keto acids in the presence of NADH. Plays essential roles in the malate-aspartate shuttle and the tricarboxylic acid cycle, important in mitochondrial NADH supply for oxidative phosphorylation. Catalyzes the reduction of 2-oxoglutarate to 2-hydroxyglutarate, leading to elevated reactive oxygen species (ROS). In Rattus norvegicus (Rat), this protein is Malate dehydrogenase, cytoplasmic (Mdh1).